A 297-amino-acid polypeptide reads, in one-letter code: Proline iminopeptidase (297 aa).

The AB hydrolase-1 domain occupies 26 to 131 (VLLLHGGPAM…GLLVSNMMAS (106 aa)). Serine 103 (nucleophile) is an active-site residue. The active site involves aspartate 243. Histidine 270 acts as the Proton donor in catalysis.

It belongs to the peptidase S33 family. As to quaternary structure, monomer.

The enzyme catalyses Release of N-terminal proline from a peptide.. In terms of biological role, releases the N-terminal proline from various substrates. The protein is Proline iminopeptidase (fpaP) of Flavobacterium johnsoniae (strain ATCC 17061 / DSM 2064 / JCM 8514 / BCRC 14874 / CCUG 350202 / NBRC 14942 / NCIMB 11054 / UW101) (Cytophaga johnsonae).